A 125-amino-acid polypeptide reads, in one-letter code: Large ribosomal subunit protein bL21 (125 aa).

The protein belongs to the bacterial ribosomal protein bL21 family. As to quaternary structure, part of the 50S ribosomal subunit. Contacts protein L20.

Its function is as follows. This protein binds to 23S rRNA in the presence of protein L20. In Synechococcus sp. (strain CC9311), this protein is Large ribosomal subunit protein bL21.